The sequence spans 118 residues: Ribonuclease P protein component (118 aa).

Belongs to the RnpA family. As to quaternary structure, consists of a catalytic RNA component (M1 or rnpB) and a protein subunit.

The catalysed reaction is Endonucleolytic cleavage of RNA, removing 5'-extranucleotides from tRNA precursor.. In terms of biological role, RNaseP catalyzes the removal of the 5'-leader sequence from pre-tRNA to produce the mature 5'-terminus. It can also cleave other RNA substrates such as 4.5S RNA. The protein component plays an auxiliary but essential role in vivo by binding to the 5'-leader sequence and broadening the substrate specificity of the ribozyme. The polypeptide is Ribonuclease P protein component (Petrotoga mobilis (strain DSM 10674 / SJ95)).